Reading from the N-terminus, the 77-residue chain is Ribonuclease P protein component 1 (77 aa).

It belongs to the eukaryotic/archaeal RNase P protein component 1 family. In terms of assembly, consists of a catalytic RNA component and at least 4-5 protein subunits.

It localises to the cytoplasm. The enzyme catalyses Endonucleolytic cleavage of RNA, removing 5'-extranucleotides from tRNA precursor.. In terms of biological role, part of ribonuclease P, a protein complex that generates mature tRNA molecules by cleaving their 5'-ends. In Sulfurisphaera tokodaii (strain DSM 16993 / JCM 10545 / NBRC 100140 / 7) (Sulfolobus tokodaii), this protein is Ribonuclease P protein component 1.